A 320-amino-acid polypeptide reads, in one-letter code: tRNA U34 carboxymethyltransferase (320 aa).

Carboxy-S-adenosyl-L-methionine is bound by residues Lys-89, Trp-103, Lys-108, Gly-128, 150–152 (DPT), 179–180 (IE), Met-194, Tyr-198, and Arg-313.

The protein belongs to the class I-like SAM-binding methyltransferase superfamily. CmoB family. Homotetramer.

It carries out the reaction carboxy-S-adenosyl-L-methionine + 5-hydroxyuridine(34) in tRNA = 5-carboxymethoxyuridine(34) in tRNA + S-adenosyl-L-homocysteine + H(+). Functionally, catalyzes carboxymethyl transfer from carboxy-S-adenosyl-L-methionine (Cx-SAM) to 5-hydroxyuridine (ho5U) to form 5-carboxymethoxyuridine (cmo5U) at position 34 in tRNAs. The sequence is that of tRNA U34 carboxymethyltransferase from Glaesserella parasuis serovar 5 (strain SH0165) (Haemophilus parasuis).